The chain runs to 330 residues: uncharacterized protein (330 aa).

125–132 (GPPGCGKT) contributes to the ATP binding site.

Belongs to the AAA ATPase family.

This is an uncharacterized protein from Sinorhizobium fredii (strain NBRC 101917 / NGR234).